The following is a 205-amino-acid chain: Ribonuclease HII (205 aa).

Positions 13 to 205 (TIVAGVDEVG…APVKYMLSMC (193 aa)) constitute an RNase H type-2 domain. 3 residues coordinate a divalent metal cation: Asp-19, Glu-20, and Asp-114.

The protein belongs to the RNase HII family. Requires Mn(2+) as cofactor. Mg(2+) serves as cofactor.

The protein localises to the cytoplasm. The catalysed reaction is Endonucleolytic cleavage to 5'-phosphomonoester.. Endonuclease that specifically degrades the RNA of RNA-DNA hybrids. This chain is Ribonuclease HII, found in Blochmanniella floridana.